The chain runs to 212 residues: MNQSLLAPYGNPIERVNAALSALRQGKGVLVVDDEDRENEGDLIYSAETLTNQQMALLIRECSGIVCLCLTDERIKQLQLPPMVSDNNSQYGTAFTVSIEAKQGVTTGVSAADRVTTIKAAIADDAKPDDLARPGHVYPLRARPGGVLERRGHTEGTVDLMKLAGLQPFGVLCEVTLPDGTMARLPEIVEFAQQHDMPVLTIEDIVAYRNTQ.

D-ribulose 5-phosphate contacts are provided by residues 37–38 (RE), D42, 150–154 (RRGHT), and E174. E38 contributes to the Mg(2+) binding site. Residue H153 coordinates Mg(2+).

The protein belongs to the DHBP synthase family. Homodimer. Mg(2+) serves as cofactor. The cofactor is Mn(2+).

The enzyme catalyses D-ribulose 5-phosphate = (2S)-2-hydroxy-3-oxobutyl phosphate + formate + H(+). The protein operates within cofactor biosynthesis; riboflavin biosynthesis; 2-hydroxy-3-oxobutyl phosphate from D-ribulose 5-phosphate: step 1/1. Catalyzes the conversion of D-ribulose 5-phosphate to formate and 3,4-dihydroxy-2-butanone 4-phosphate. The chain is 3,4-dihydroxy-2-butanone 4-phosphate synthase from Shewanella pealeana (strain ATCC 700345 / ANG-SQ1).